We begin with the raw amino-acid sequence, 456 residues long: NADH-quinone oxidoreductase subunit N (456 aa).

The next 14 membrane-spanning stretches (helical) occupy residues 6-26, 45-65, 75-95, 97-117, 118-138, 151-171, 181-201, 220-240, 252-272, 281-301, 308-328, 355-375, 382-402, and 426-446; these read LFAL…MLLA, VAAL…GALF, TAYA…AGVA, EAPA…GAGH, AATL…LFAF, FLVM…LIYA, WVGH…GLAF, PAGA…IAIL, LWSA…NVLA, MLGY…ASGA, VLFY…ASAM, GLLS…LYLF, ESWI…YYYI, and LLLI…LVLI.

Belongs to the complex I subunit 2 family. In terms of assembly, NDH-1 is composed of 14 different subunits. Subunits NuoA, H, J, K, L, M, N constitute the membrane sector of the complex.

It is found in the cell inner membrane. The enzyme catalyses a quinone + NADH + 5 H(+)(in) = a quinol + NAD(+) + 4 H(+)(out). In terms of biological role, NDH-1 shuttles electrons from NADH, via FMN and iron-sulfur (Fe-S) centers, to quinones in the respiratory chain. The immediate electron acceptor for the enzyme in this species is believed to be ubiquinone. Couples the redox reaction to proton translocation (for every two electrons transferred, four hydrogen ions are translocated across the cytoplasmic membrane), and thus conserves the redox energy in a proton gradient. This chain is NADH-quinone oxidoreductase subunit N, found in Rhodopseudomonas palustris (strain BisA53).